Reading from the N-terminus, the 225-residue chain is Pyrimidine 5'-nucleotidase YjjG (225 aa).

Residue D9 is the Nucleophile of the active site.

The protein belongs to the HAD-like hydrolase superfamily. YjjG family. Monomer, homodimer and possibly homotetramer in solution. Requires Mn(2+) as cofactor. The cofactor is Mg(2+). It depends on Co(2+) as a cofactor.

Its subcellular location is the cytoplasm. It carries out the reaction a ribonucleoside 5'-phosphate + H2O = a ribonucleoside + phosphate. The enzyme catalyses a 2'-deoxyribonucleoside 5'-phosphate + H2O = a 2'-deoxyribonucleoside + phosphate. It catalyses the reaction UMP + H2O = uridine + phosphate. The catalysed reaction is dUMP + H2O = 2'-deoxyuridine + phosphate. It carries out the reaction dTMP + H2O = thymidine + phosphate. In contrast to nucleotidases from other families, is not inhibited by ribo- and deoxyribonucleoside di- and triphosphates. In terms of biological role, nucleotidase that shows high phosphatase activity toward non-canonical pyrimidine nucleotides and three canonical nucleoside 5'-monophosphates (UMP, dUMP, and dTMP), and very low activity against TDP, IMP, UDP, GMP, dGMP, AMP, dAMP, and 6-phosphogluconate. Appears to function as a house-cleaning nucleotidase in vivo, since the general nucleotidase activity of YjjG allows it to protect cells against non-canonical pyrimidine derivatives such as 5-fluoro-2'-deoxyuridine, 5-fluorouridine, 5-fluoroorotate, 5-fluorouracil, and 5-aza-2'-deoxycytidine, and prevents the incorporation of potentially mutagenic nucleotides into DNA. Its dUMP phosphatase activity that catalyzes the hydrolysis of dUMP to deoxyuridine is necessary for thymine utilization via the thymine salvage pathway. Is strictly specific to substrates with 5'-phosphates and shows no activity against nucleoside 2'- or 3'-monophosphates. The chain is Pyrimidine 5'-nucleotidase YjjG (yjjG) from Escherichia coli (strain K12).